The chain runs to 67 residues: Medusin-PT (67 aa).

Residues 1-22 (MAFLKKSLFLVFFLGFVSLSIC) form the signal peptide. A propeptide spanning residues 23-48 (EEEKRETDEKENEQEDDREERSEEKR) is cleaved from the precursor. The segment at 25–46 (EKRETDEKENEQEDDREERSEE) is disordered. A compositionally biased stretch (acidic residues) spans 31–40 (EKENEQEDDR). At Leu66 the chain carries Leucine amide.

This sequence belongs to the frog skin active peptide (FSAP) family. Medusin subfamily. In the synthetic mutant medusin-PT1a [T58K], the Leu-50 has been modified in a D-amino acid. In medusin-PT1a, there is an increase in antimicrobial activity, and an increase in hemolytic activity. It is more potent against S.aureus and gains activity against MRSA, E.faecalis, E.coli, P.aeruginosa and C.albicans. There is an important increase in both biofilm inhibition and biofilm eradication. As to expression, expressed by the skin glands.

It localises to the secreted. It is found in the target cell membrane. Its function is as follows. Antimicrobial peptide with activity against Gram-positive bacteria S.epidermidis ATCC 12228 (MIC=50 uM) and S.aureus (MIC=64 ug/ml and MBC=128 ug/ml). Not active against some Gram-positive bacteria (methicillin-resistant S.aureus (MRSA), E.faecalis), Gram-negative bacterium E.coli ATCC 25922 and fungus C.albicans at concentrations up to 100 uM. Can only slightly inhibit the formation of biofilm by S.aureus (minimal biofilm inhibitionconcentration MBIC=512 ug/ml, minimal biofilm eradication concentration MBEC&gt;512 ug/ml). Has an anti-inflammatory effect, since it inhibits the production of the pro-inflammatory cytokines TNF-alpha and IL-1beta. Has high activity of stimulation of insulin release, which may protect the species from being eaten by predators by causing fatal hypoglycemia. Is not cytotoxic to cancer line cells. Shows very low hemolysis on horse erythrocytes and moderate hemolysis on mouse erythrocytes. This Phyllomedusa tarsius (Brownbelly leaf frog) protein is Medusin-PT.